We begin with the raw amino-acid sequence, 64 residues long: Putative antitoxin AF_1074 (64 aa).

This sequence belongs to the UPF0165 family.

Its function is as follows. Possibly the antitoxin component of a type II toxin-antitoxin (TA) system. This is Putative antitoxin AF_1074 from Archaeoglobus fulgidus (strain ATCC 49558 / DSM 4304 / JCM 9628 / NBRC 100126 / VC-16).